The chain runs to 804 residues: Cas scaffolding protein family member 4 (804 aa).

In terms of domain architecture, SH3 spans 11–73 (PKTLLARALY…PANRLQVLRE (63 aa)). Serine 200 and serine 297 each carry phosphoserine. Disordered regions lie at residues 369-395 (LERG…DSDR), 607-628 (QRET…TEHS), and 642-686 (QQSP…TERK). The segment covering 380-390 (PWISGQTSFLS) has biased composition (polar residues). Over residues 649–664 (EKGKPTMEGKSNRNPD) the composition is skewed to basic and acidic residues.

It belongs to the CAS family. In terms of assembly, interacts (via SH3 domain) with PTK2/FAK1 (via C-terminus). In terms of processing, phosphorylated on tyrosines by SRC.

It is found in the cytoplasm. Its subcellular location is the cytoskeleton. The protein resides in the cell junction. It localises to the focal adhesion. In terms of biological role, docking protein that plays a role in tyrosine kinase-based signaling related to cell adhesion and cell spreading. Regulates PTK2/FAK1 activity, focal adhesion integrity, and cell spreading. In Mus musculus (Mouse), this protein is Cas scaffolding protein family member 4.